The sequence spans 383 residues: WD repeat-containing protein 55 (383 aa).

Basic and acidic residues predominate over residues 1-11 (MDRTCEERPAE). The segment at 1–33 (MDRTCEERPAEDGSDEEDPDSMEAPTRIRDTPE) is disordered. A compositionally biased stretch (acidic residues) spans 12-21 (DGSDEEDPDS). Residue S14 is modified to Phosphoserine. WD repeat units follow at residues 36–75 (VLEAPASGLAFHPARDLLAAGDVDGDVFVFSYSCQEGETK), 82–121 (HHLKACRAVAFSEDGQKLITVSKDKAIHVLDVEQGQLERR), 125–163 (AHGAPINSLLLVDENVLATGDDTGGICLWDQRKEGPLMD), 166–205 (QHEEYIADMALDPAKKLLLTASGDGCLGIFNIKRRRFELL), 208–247 (PQSGDLTSVTLMKWGKKVACGSSEGTIYLFNWNGFGATSD), 250–289 (ALRAESIDCMVPVTESLLCTGSTDGVIRAVNILPNRVVGS), and 293–332 (HTGEPVEELALSHCGRFLASSGHDQRLKFWDMAQLRAVVV). Residue S354 is modified to Phosphoserine. The interval 363 to 383 (REEGEDSMAQEEKEETGDDSD) is disordered. The span at 365-383 (EGEDSMAQEEKEETGDDSD) shows a compositional bias: acidic residues. T378 carries the phosphothreonine modification. S382 carries the phosphoserine modification.

It belongs to the WD repeat WDR55 family.

It is found in the nucleus. The protein localises to the nucleolus. Its subcellular location is the cytoplasm. In terms of biological role, nucleolar protein that acts as a modulator of rRNA synthesis. Plays a central role during organogenesis. The protein is WD repeat-containing protein 55 (WDR55) of Homo sapiens (Human).